The sequence spans 181 residues: MMNIILIGARGAGKSKVSRSLSKQSEIPVVSTDSVAVYETGGIPIPKFVENNGWKAFRELEYSILQKLQNANGIILDCGGGILFDLDESGNEVLSERKLDLLRKIGRIVYLERGIEELVEKVKGDKTRPDLSKITTYRSILEKRLPVYQEAAHFKLNLTKLSKEEAAEKILDWIGIKSKSI.

11-16 is an ATP binding site; that stretch reads GAGKSK. Ser-15 provides a ligand contact to Mg(2+). Substrate is bound by residues Asp-33, Arg-58, and Gly-80. Residue Arg-128 coordinates ATP. Residue Arg-144 participates in substrate binding.

Belongs to the shikimate kinase family. Monomer. It depends on Mg(2+) as a cofactor.

It is found in the cytoplasm. The catalysed reaction is shikimate + ATP = 3-phosphoshikimate + ADP + H(+). Its pathway is metabolic intermediate biosynthesis; chorismate biosynthesis; chorismate from D-erythrose 4-phosphate and phosphoenolpyruvate: step 5/7. Catalyzes the specific phosphorylation of the 3-hydroxyl group of shikimic acid using ATP as a cosubstrate. The sequence is that of Shikimate kinase from Leptospira biflexa serovar Patoc (strain Patoc 1 / Ames).